Here is a 121-residue protein sequence, read N- to C-terminus: Two-component response regulator ORR8 (121 aa).

The Response regulatory domain maps to 5–121 (HVLVVDDTHV…VDVPRIMKYI (117 aa)). Position 55 is a 4-aspartylphosphate (Asp-55).

This sequence belongs to the ARR family. Type-A subfamily. Post-translationally, two-component system major event consists of a His-to-Asp phosphorelay between a sensor histidine kinase (HK) and a response regulator (RR). In plants, the His-to-Asp phosphorelay involves an additional intermediate named Histidine-containing phosphotransfer protein (HPt). This multistep phosphorelay consists of a His-Asp-His-Asp sequential transfer of a phosphate group between first a His and an Asp of the HK protein, followed by the transfer to a conserved His of the HPt protein and finally the transfer to an Asp in the receiver domain of the RR protein. Expressed in mature leaves, and at low levels in roots, shoots and flowers.

In terms of biological role, functions as a response regulator involved in His-to-Asp phosphorelay signal transduction system. Phosphorylation of the Asp residue in the receiver domain activates the ability of the protein to promote the transcription of target genes. Type-A response regulators seem to act as negative regulators of the cytokinin signaling. The protein is Two-component response regulator ORR8 of Oryza sativa subsp. indica (Rice).